Here is a 613-residue protein sequence, read N- to C-terminus: Forkhead box protein O (613 aa).

Disordered stretches follow at residues Arg39 to Ser90, Lys182 to Lys205, Gly217 to Pro269, and Gln317 to Gly360. Thr44 is modified (phosphothreonine; by PKB/AKT1). Residues Thr63–Gln80 are compositionally biased toward polar residues. At Ser75 the chain carries Phosphoserine. Low complexity predominate over residues Asn81–Ser90. Residues Trp95–Gly201 constitute a DNA-binding region (fork-head). The residue at position 190 (Ser190) is a Phosphoserine; by PKB/AKT1. Composition is skewed to polar residues over residues Ala221–Ser230 and Arg256–Gly265. Ser259 carries the phosphoserine; by PKB/AKT1 modification. Phosphoserine occurs at positions 262, 263, and 268. Pro residues predominate over residues Ser327–Pro336. Over residues Pro337–Ala353 the composition is skewed to low complexity.

As to quaternary structure, interacts with melt.

It is found in the cytoplasm. It localises to the nucleus. In terms of biological role, transcription factor involved in the regulation of the insulin signaling pathway. Consistently activates both the downstream target Thor\d4EBP and the feedback control target InR. Involved in negative regulation of the cell cycle, modulating cell growth and proliferation. In response to cellular stresses, such as nutrient deprivation or increased levels of reactive oxygen species, foxo is activated and inhibits growth through the action of target genes such as Thor. Foxo activated in the adult fat body can regulate lifespan in adults; an insulin peptide itself may function as one secondary messenger of insulin-regulated aging. Also regulates Lip4, homolog of human acid lipases, thereby acting as a key modulator of lipid metabolism by insulin signaling and integrates insulin responses to glucose and lipid homeostasis. In Drosophila melanogaster (Fruit fly), this protein is Forkhead box protein O.